The primary structure comprises 128 residues: Ribonuclease pancreatic B (128 aa).

Residues 1–21 are disordered; that stretch reads AESSAMKFQRQHMDPEGSPSN. Substrate contacts are provided by Lys-7 and Arg-10. His-12 serves as the catalytic Proton acceptor. Residues Asn-21 and Asn-34 are each glycosylated (N-linked (GlcNAc...) asparagine). 4 cysteine pairs are disulfide-bonded: Cys-26–Cys-84, Cys-40–Cys-95, Cys-58–Cys-110, and Cys-65–Cys-72. Substrate is bound by residues 41–45, Lys-66, and Arg-85; that span reads KPVNT. His-119 serves as the catalytic Proton donor.

The protein belongs to the pancreatic ribonuclease family. In terms of tissue distribution, pancreas.

It localises to the secreted. It catalyses the reaction an [RNA] containing cytidine + H2O = an [RNA]-3'-cytidine-3'-phosphate + a 5'-hydroxy-ribonucleotide-3'-[RNA].. It carries out the reaction an [RNA] containing uridine + H2O = an [RNA]-3'-uridine-3'-phosphate + a 5'-hydroxy-ribonucleotide-3'-[RNA].. The protein is Ribonuclease pancreatic B of Cavia porcellus (Guinea pig).